Consider the following 245-residue polypeptide: Probable phosphatase YcdX (245 aa).

Positions 7, 9, 15, 40, 73, 101, 131, 192, and 194 each coordinate Zn(2+).

Belongs to the PHP family. Homotrimer. Zn(2+) serves as cofactor.

The sequence is that of Probable phosphatase YcdX from Escherichia coli (strain K12 / MC4100 / BW2952).